Reading from the N-terminus, the 799-residue chain is E3 UFM1-protein ligase 1 homolog (799 aa).

A disordered region spans residues 429 to 483; the sequence is TTTTTTTQPSKKKDNLINSDDDDNQDNNKKSSKGKNKKSKQQQSSIQKLINDSED. Positions 458-468 are enriched in basic residues; sequence KSSKGKNKKSK. Residues 469 to 478 show a composition bias toward low complexity; it reads QQQSSIQKLI.

The protein belongs to the UFL1 family.

Its function is as follows. E3 UFM1-protein ligase that mediates ufmylation of target proteins. The polypeptide is E3 UFM1-protein ligase 1 homolog (Dictyostelium discoideum (Social amoeba)).